The following is a 232-amino-acid chain: Cilia- and flagella-associated protein 95 (232 aa).

The Extracellular portion of the chain corresponds to 1–96 (MDSSDSSCQE…PVWISETREK (96 aa)). Residue N75 is glycosylated (N-linked (GlcNAc...) asparagine). A helical membrane pass occupies residues 97-115 (MAQVCLNTKLAKIKSKALL). The Cytoplasmic segment spans residues 116-232 (NEETMNSGII…TGGPIAPFLK (117 aa)). A mn region spans residues 153–163 (LTTYAEEYAPP).

In terms of assembly, microtubule inner protein component of sperm flagellar doublet microtubules. Interacts with MYH9. Interacts with MYH10. As to expression, expressed in trachea multiciliated cells.

It is found in the cytoplasm. It localises to the cytoskeleton. The protein resides in the cilium axoneme. Its subcellular location is the flagellum axoneme. The protein localises to the cell membrane. Microtubule inner protein (MIP) part of the dynein-decorated doublet microtubules (DMTs) in cilia axoneme, which is required for motile cilia beating. This Bos taurus (Bovine) protein is Cilia- and flagella-associated protein 95.